A 327-amino-acid chain; its full sequence is Biotin synthase (327 aa).

A Radical SAM core domain is found at 52 to 279 (TKVQLSTLVS…ASYVRLSAGR (228 aa)). Positions 67, 71, and 74 each coordinate [4Fe-4S] cluster. Positions 111, 142, 202, and 274 each coordinate [2Fe-2S] cluster.

The protein belongs to the radical SAM superfamily. Biotin synthase family. Homodimer. [4Fe-4S] cluster serves as cofactor. Requires [2Fe-2S] cluster as cofactor.

It carries out the reaction (4R,5S)-dethiobiotin + (sulfur carrier)-SH + 2 reduced [2Fe-2S]-[ferredoxin] + 2 S-adenosyl-L-methionine = (sulfur carrier)-H + biotin + 2 5'-deoxyadenosine + 2 L-methionine + 2 oxidized [2Fe-2S]-[ferredoxin]. It functions in the pathway cofactor biosynthesis; biotin biosynthesis; biotin from 7,8-diaminononanoate: step 2/2. Functionally, catalyzes the conversion of dethiobiotin (DTB) to biotin by the insertion of a sulfur atom into dethiobiotin via a radical-based mechanism. This Chromobacterium violaceum (strain ATCC 12472 / DSM 30191 / JCM 1249 / CCUG 213 / NBRC 12614 / NCIMB 9131 / NCTC 9757 / MK) protein is Biotin synthase.